Here is a 102-residue protein sequence, read N- to C-terminus: Keratinocyte differentiation-associated protein (102 aa).

The first 22 residues, 1–22, serve as a signal peptide directing secretion; it reads MKIPILPVVALLSLLALHAVQG.

In terms of tissue distribution, expression restricted to suprabasal keratinocytes of the epidermis.

It localises to the secreted. May act as a soluble regulator of keratinocyte differentiation. May play an important role in embryonic skin morphogenesis. This Mus musculus (Mouse) protein is Keratinocyte differentiation-associated protein.